A 268-amino-acid chain; its full sequence is Sexual development regulator velC (268 aa).

Basic and acidic residues predominate over residues 1 to 13; sequence MPHGFDKLLHPEP. 2 disordered regions span residues 1-124 and 142-165; these read MPHG…DNFS and DPDP…NPPH. The segment covering 14–26 has biased composition (pro residues); sequence EPQSPSPPPPPRR. One can recognise a Velvet domain in the interval 28–257; the sequence is STQSRYHLHI…ELGFVELKTR (230 aa). A compositionally biased stretch (basic and acidic residues) spans 92–121; it reads DGNRDREREREHERERERERETDGVARTDD.

It belongs to the velvet family. VelC subfamily. In terms of assembly, interacts with velA and vosA.

The protein localises to the nucleus. Velvet-domain-containing protein that acts as a positive regulator of sexual development. The chain is Sexual development regulator velC from Penicillium rubens (strain ATCC 28089 / DSM 1075 / NRRL 1951 / Wisconsin 54-1255) (Penicillium chrysogenum).